The primary structure comprises 158 residues: Phosphopantetheine adenylyltransferase (158 aa).

Residue threonine 10 participates in substrate binding. Residues 10–11 and histidine 18 each bind ATP; that span reads TF. Residues lysine 42, leucine 74, and arginine 88 each contribute to the substrate site. ATP-binding positions include 89–91, glutamate 99, and 124–130; these read GLR and YSFISSS.

The protein belongs to the bacterial CoaD family. In terms of assembly, homohexamer. The cofactor is Mg(2+).

Its subcellular location is the cytoplasm. The catalysed reaction is (R)-4'-phosphopantetheine + ATP + H(+) = 3'-dephospho-CoA + diphosphate. It functions in the pathway cofactor biosynthesis; coenzyme A biosynthesis; CoA from (R)-pantothenate: step 4/5. Functionally, reversibly transfers an adenylyl group from ATP to 4'-phosphopantetheine, yielding dephospho-CoA (dPCoA) and pyrophosphate. The sequence is that of Phosphopantetheine adenylyltransferase from Erwinia tasmaniensis (strain DSM 17950 / CFBP 7177 / CIP 109463 / NCPPB 4357 / Et1/99).